A 293-amino-acid chain; its full sequence is NAD kinase (293 aa).

Asp72 functions as the Proton acceptor in the catalytic mechanism. Residues 72 to 73 (DG), 146 to 147 (ND), Arg157, Lys174, Asp176, 187 to 192 (TAYALS), and Gln247 each bind NAD(+).

The protein belongs to the NAD kinase family. The cofactor is a divalent metal cation.

The protein localises to the cytoplasm. It carries out the reaction NAD(+) + ATP = ADP + NADP(+) + H(+). Its function is as follows. Involved in the regulation of the intracellular balance of NAD and NADP, and is a key enzyme in the biosynthesis of NADP. Catalyzes specifically the phosphorylation on 2'-hydroxyl of the adenosine moiety of NAD to yield NADP. The polypeptide is NAD kinase (Marinomonas sp. (strain MWYL1)).